The primary structure comprises 314 residues: 2,3-dihydroxyphenylpropionate/2,3-dihydroxicinnamic acid 1,2-dioxygenase 1 (314 aa).

Histidine 115 functions as the Proton donor in the catalytic mechanism. The Proton acceptor role is filled by histidine 179.

This sequence belongs to the LigB/MhpB extradiol dioxygenase family. As to quaternary structure, homotetramer. Fe(2+) is required as a cofactor.

It catalyses the reaction 3-(2,3-dihydroxyphenyl)propanoate + O2 = (2Z,4E)-2-hydroxy-6-oxonona-2,4-dienedioate + H(+). It carries out the reaction (2E)-3-(2,3-dihydroxyphenyl)prop-2-enoate + O2 = (2Z,4E,7E)-2-hydroxy-6-oxonona-2,4,7-trienedioate + H(+). It participates in aromatic compound metabolism; 3-phenylpropanoate degradation. Its function is as follows. Catalyzes the non-heme iron(II)-dependent oxidative cleavage of 2,3-dihydroxyphenylpropionic acid and 2,3-dihydroxicinnamic acid into 2-hydroxy-6-ketononadienedioate and 2-hydroxy-6-ketononatrienedioate, respectively. This Pseudomonas putida (Arthrobacter siderocapsulatus) protein is 2,3-dihydroxyphenylpropionate/2,3-dihydroxicinnamic acid 1,2-dioxygenase 1.